Reading from the N-terminus, the 432-residue chain is Adenylosuccinate synthetase (432 aa).

GTP-binding positions include 13–19 (GDEGKGK) and 41–43 (GHT). Asp-14 functions as the Proton acceptor in the catalytic mechanism. Positions 14 and 41 each coordinate Mg(2+). IMP contacts are provided by residues 14–17 (DEGK), 39–42 (NAGH), Thr-130, Arg-144, Gln-225, Thr-240, and Arg-304. Catalysis depends on His-42, which acts as the Proton donor. 300 to 306 (ATTGRKR) is a binding site for substrate. Residues Arg-306, 332–334 (KLD), and 414–416 (STG) each bind GTP.

It belongs to the adenylosuccinate synthetase family. Homodimer. Requires Mg(2+) as cofactor.

It is found in the cytoplasm. The enzyme catalyses IMP + L-aspartate + GTP = N(6)-(1,2-dicarboxyethyl)-AMP + GDP + phosphate + 2 H(+). It functions in the pathway purine metabolism; AMP biosynthesis via de novo pathway; AMP from IMP: step 1/2. Functionally, plays an important role in the de novo pathway of purine nucleotide biosynthesis. Catalyzes the first committed step in the biosynthesis of AMP from IMP. The sequence is that of Adenylosuccinate synthetase from Alkalilimnicola ehrlichii (strain ATCC BAA-1101 / DSM 17681 / MLHE-1).